The chain runs to 30 residues: Trypsin inhibitor 2 (30 aa).

3 disulfide bridges follow: C2–C19, C9–C21, and C15–C27.

The protein belongs to the protease inhibitor I7 (squash-type serine protease inhibitor) family.

The protein resides in the secreted. Its function is as follows. Inhibits trypsin. The chain is Trypsin inhibitor 2 from Ecballium elaterium (Squirting cucumber).